Reading from the N-terminus, the 697-residue chain is T-related protein (697 aa).

Residues 1-60 form a disordered region; the sequence is MTTSHILSAVDPTTGLSGNVSGGGGGGGAGGGAGSGSPQHVTHNGHGHGHGLGGVAAVSG. Gly residues-rich tracts occupy residues 20–35 and 50–60; these read VSGG…GAGS and HGLGGVAAVSG. The T-box DNA-binding region spans 96–264; sequence LWLRFQNLTN…YNPFAKAFLD (169 aa). Positions 316 to 330 are enriched in low complexity; the sequence is SVSSAESVGPSSGGS. 2 disordered regions span residues 316–407 and 462–488; these read SVSS…GGIG and VCSG…TSSP. Polar residues predominate over residues 337 to 351; it reads SLSSRSVAPTRTTPY. Composition is skewed to low complexity over residues 352 to 373, 381 to 401, and 469 to 488; these read SRPR…SSTS, QTPT…VSSS, and SSHN…TSSP.

Its subcellular location is the nucleus. Functionally, required for the specification of the hindgut and anal pads. In Drosophila melanogaster (Fruit fly), this protein is T-related protein (byn).